Reading from the N-terminus, the 440-residue chain is Probable exopolygalacturonase C (440 aa).

Positions 1–19 (MSVFKASFLFLLSSSLVHG) are cleaved as a signal peptide. Residues asparagine 82 and asparagine 99 are each glycosylated (N-linked (GlcNAc...) asparagine). PbH1 repeat units follow at residues 215 to 236 (GTNI…AVGA), 238 to 259 (SHDT…SIGS), and 265 to 288 (TDFA…YAAR). Aspartate 229 serves as the catalytic Proton donor. Residue histidine 253 is part of the active site. 4 N-linked (GlcNAc...) asparagine glycosylation sites follow: asparagine 269, asparagine 301, asparagine 311, and asparagine 334. Cysteine 387 and cysteine 393 are joined by a disulfide. Residues asparagine 417 and asparagine 432 are each glycosylated (N-linked (GlcNAc...) asparagine).

It belongs to the glycosyl hydrolase 28 family.

It localises to the secreted. It catalyses the reaction [(1-&gt;4)-alpha-D-galacturonosyl](n) + H2O = alpha-D-galacturonate + [(1-&gt;4)-alpha-D-galacturonosyl](n-1). Specific in hydrolyzing the terminal glycosidic bond of polygalacturonic acid and oligogalacturonates. The polypeptide is Probable exopolygalacturonase C (pgxC) (Aspergillus niger (strain ATCC MYA-4892 / CBS 513.88 / FGSC A1513)).